Here is a 160-residue protein sequence, read N- to C-terminus: Cytochrome b6-f complex subunit 4 (160 aa).

A run of 3 helical transmembrane segments spans residues 36-56 (LLYI…GLAV), 95-115 (LLGV…PFLE), and 131-151 (TVFL…TLPI).

The protein belongs to the cytochrome b family. PetD subfamily. The 4 large subunits of the cytochrome b6-f complex are cytochrome b6, subunit IV (17 kDa polypeptide, petD), cytochrome f and the Rieske protein, while the 4 small subunits are petG, petL, petM and petN. The complex functions as a dimer.

It is found in the plastid. Its subcellular location is the chloroplast thylakoid membrane. Its function is as follows. Component of the cytochrome b6-f complex, which mediates electron transfer between photosystem II (PSII) and photosystem I (PSI), cyclic electron flow around PSI, and state transitions. The sequence is that of Cytochrome b6-f complex subunit 4 from Sorghum bicolor (Sorghum).